Consider the following 185-residue polypeptide: Ribosome-recycling factor (185 aa).

It belongs to the RRF family.

It is found in the cytoplasm. Its function is as follows. Responsible for the release of ribosomes from messenger RNA at the termination of protein biosynthesis. May increase the efficiency of translation by recycling ribosomes from one round of translation to another. This is Ribosome-recycling factor from Corynebacterium efficiens (strain DSM 44549 / YS-314 / AJ 12310 / JCM 11189 / NBRC 100395).